Reading from the N-terminus, the 432-residue chain is 3-phosphoshikimate 1-carboxyvinyltransferase (432 aa).

3-phosphoshikimate is bound by residues Lys-22, Ser-23, and Arg-27. Lys-22 contacts phosphoenolpyruvate. Residues Gly-96 and Arg-127 each coordinate phosphoenolpyruvate. Residues Ser-173, Ser-174, Gln-175, Ser-201, Asp-316, Asn-339, and Lys-343 each coordinate 3-phosphoshikimate. Residue Gln-175 participates in phosphoenolpyruvate binding. Residue Asp-316 is the Proton acceptor of the active site. Phosphoenolpyruvate-binding residues include Arg-347, Arg-391, and Lys-416.

Belongs to the EPSP synthase family. Monomer.

It is found in the cytoplasm. The catalysed reaction is 3-phosphoshikimate + phosphoenolpyruvate = 5-O-(1-carboxyvinyl)-3-phosphoshikimate + phosphate. It functions in the pathway metabolic intermediate biosynthesis; chorismate biosynthesis; chorismate from D-erythrose 4-phosphate and phosphoenolpyruvate: step 6/7. In terms of biological role, catalyzes the transfer of the enolpyruvyl moiety of phosphoenolpyruvate (PEP) to the 5-hydroxyl of shikimate-3-phosphate (S3P) to produce enolpyruvyl shikimate-3-phosphate and inorganic phosphate. The sequence is that of 3-phosphoshikimate 1-carboxyvinyltransferase from Actinobacillus pleuropneumoniae serotype 7 (strain AP76).